The chain runs to 324 residues: NADH-dependent D-xylose reductase (324 aa).

Tyrosine 54 serves as the catalytic Proton donor. Histidine 116 serves as a coordination point for substrate. Position 220–286 (serine 220–asparagine 286) interacts with NAD(+).

Belongs to the aldo/keto reductase family.

It catalyses the reaction xylitol + NAD(+) = D-xylose + NADH + H(+). It carries out the reaction xylitol + NADP(+) = D-xylose + NADPH + H(+). The protein operates within carbohydrate metabolism; D-xylose degradation. Functionally, reduces D-xylose into xylitol. Preferentially utilizes NADH as a cosubstrate. This chain is NADH-dependent D-xylose reductase (XYL1), found in Candida parapsilosis (Yeast).